The chain runs to 117 residues: B-box domain protein 30 (117 aa).

A B box-type; atypical zinc finger spans residues 27–73 (KAPVSCELCGENATVYCEADAAFLCRKCDRWVHSANFLARRHLRRVI). Residues cysteine 32, cysteine 35, cysteine 54, and histidine 59 each contribute to the Zn(2+) site. The PFVFL motif lies at 113 to 117 (PFVFL).

In terms of assembly, interacts with CO (via B-box) and with TPL (via PFVFL motif). As to expression, highly expressed in shoot apical meristems and in vascular tissues of leaves. Also detected in petioles.

Its subcellular location is the nucleus. In terms of biological role, developmental regulator acting by forming heterodimeric complexes, that sequester CO and CO-like (COL) proteins into non-functional complexes. Engages CO and the transcriptional repressor TPL in a tripartite complex. Involved in the CO-mediated long-day flowering-promotion pathway. The chain is B-box domain protein 30 from Arabidopsis thaliana (Mouse-ear cress).